The sequence spans 481 residues: MSAADHLMTVHLVSMGCARNDVDSEELAARMEAGGFRLVDDPAEAETVVVNTCGFIEQAKKDSVDTLLAAADLKGNGITTSVVAVGCMAERYGRELAESLPEADAVLGFDDYGDIAGRLRTILDGGSLETHVPRDRRTLLPISPVDRPTARAEVSVPGHGTAPDLSASVTPDSGPRATRRRLGTGPSAPLKMASGCDRRCAFCAIPRFRGSYLSRPIAEIVEEARWLVDHGVKEVFLVSENSSSYGKDLGDLRLLEKLLVNLDQVDGLEWIRVSYLQPAELRPGLIDTILATDKVVPYFDLSFQHASGPLLRRMRRFGDAESFLNIIDSIRSRCPEAGLRSNFITGFPGETDADVAVLADFLQRARLDVAGVFAYSDEEGTEAAGLDGHVDEDVVTARREDLADLTDELVSQRAEDRIGTRGRVMVEEIDEAVIGRAEHQGPEVDGCVTLVDAAAVSVGDIVDVEFVGSDGVDLVARPANA.

Residues 8–124 enclose the MTTase N-terminal domain; sequence MTVHLVSMGC…IAGRLRTILD (117 aa). [4Fe-4S] cluster contacts are provided by Cys-17, Cys-53, and Cys-87. Positions 148–188 are disordered; sequence PTARAEVSVPGHGTAPDLSASVTPDSGPRATRRRLGTGPSA. Residues 182 to 413 enclose the Radical SAM core domain; the sequence is LGTGPSAPLK…DLTDELVSQR (232 aa). Cys-196, Cys-200, and Cys-203 together coordinate [4Fe-4S] cluster. The 66-residue stretch at 415 to 480 folds into the TRAM domain; it reads EDRIGTRGRV…GVDLVARPAN (66 aa).

It belongs to the methylthiotransferase family. RimO subfamily. [4Fe-4S] cluster serves as cofactor.

It localises to the cytoplasm. The catalysed reaction is L-aspartate(89)-[ribosomal protein uS12]-hydrogen + (sulfur carrier)-SH + AH2 + 2 S-adenosyl-L-methionine = 3-methylsulfanyl-L-aspartate(89)-[ribosomal protein uS12]-hydrogen + (sulfur carrier)-H + 5'-deoxyadenosine + L-methionine + A + S-adenosyl-L-homocysteine + 2 H(+). In terms of biological role, catalyzes the methylthiolation of an aspartic acid residue of ribosomal protein uS12. The protein is Ribosomal protein uS12 methylthiotransferase RimO of Cutibacterium acnes (strain DSM 16379 / KPA171202) (Propionibacterium acnes).